The sequence spans 108 residues: Glutaredoxin-C10 (108 aa).

Residues M1–W107 form the Glutaredoxin domain. Residues C21 and C24 are joined by a disulfide bond. Positions A105–L108 match the Responsive for interaction with TGA factors motif.

This sequence belongs to the glutaredoxin family. CC-type subfamily.

The protein resides in the cytoplasm. The protein localises to the nucleus. Functionally, has a glutathione-disulfide oxidoreductase activity in the presence of NADPH and glutathione reductase. Reduces low molecular weight disulfides and proteins. This is Glutaredoxin-C10 (GRXC10) from Oryza sativa subsp. japonica (Rice).